The sequence spans 453 residues: Protein ECM18 (453 aa).

The AB hydrolase-1 domain maps to 130 to 435; that stretch reads LLIHGYAASS…SGHNLFLDNP (306 aa). The short motif at 428–433 is the HXXXXD motif element; the sequence is HNLFLD.

It belongs to the peptidase S33 family. ABHD4/ABHD5 subfamily.

It localises to the mitochondrion. Functionally, may be involved in cell wall organization and biogenesis. The chain is Protein ECM18 (ECM18) from Saccharomyces cerevisiae (strain ATCC 204508 / S288c) (Baker's yeast).